We begin with the raw amino-acid sequence, 268 residues long: Taurine import ATP-binding protein TauB (268 aa).

The region spanning 4 to 236 (LSIENISMRF…MGVNADLREV (233 aa)) is the ABC transporter domain. Residue 41–48 (GPSGCGKT) participates in ATP binding.

The protein belongs to the ABC transporter superfamily. Taurine importer (TC 3.A.1.17.1) family. As to quaternary structure, the complex is composed of two ATP-binding proteins (TauB), two transmembrane proteins (TauC) and a solute-binding protein (TauA).

The protein localises to the cell inner membrane. The catalysed reaction is taurine(out) + ATP + H2O = taurine(in) + ADP + phosphate + H(+). Its function is as follows. Part of the ABC transporter complex TauABC involved in taurine import. Responsible for energy coupling to the transport system. The polypeptide is Taurine import ATP-binding protein TauB (Ruegeria pomeroyi (strain ATCC 700808 / DSM 15171 / DSS-3) (Silicibacter pomeroyi)).